The sequence spans 272 residues: Cell division protein FtsQ (272 aa).

The Cytoplasmic portion of the chain corresponds to 1 to 43 (MEYNPPNTRERIAARRQRLRQPSSEPAIPGWRRRFIDGLQSGR). The helical transmembrane segment at 44 to 64 (IVSGAVFVVSCLALFYVLFSS) threads the bilayer. Residues 65–272 (QFRVQTVEVV…FYQNRTDGRS (208 aa)) are Extracellular-facing. Residues 66–133 (FRVQTVEVVG…DRARIVIVER (68 aa)) enclose the POTRA domain.

The protein belongs to the FtsQ/DivIB family. FtsQ subfamily.

The protein localises to the cell membrane. In terms of biological role, essential cell division protein. This chain is Cell division protein FtsQ, found in Chloroflexus aggregans (strain MD-66 / DSM 9485).